The following is a 1859-amino-acid chain: U3 small nucleolar RNA-associated protein 10 (1859 aa).

The helical transmembrane segment at 258 to 278 (LGAYSVLAVLSAVAPLSIELL) threads the bilayer. The stretch at 578–616 (VLPLLLIAFNDPSSHIRAAFAQLVQLVSEITKAIHENKK) is one HEAT 1 repeat. The helical transmembrane segment at 1392–1412 (IVIASISAIVSIVNVLGIKTL) threads the bilayer. Residues 1819–1857 (LVPHIAELLEDDDEAVEIEVREGLVRVIEKVLGEPLDRY) form an HEAT 2 repeat.

Belongs to the HEATR1/UTP10 family. As to quaternary structure, component of the ribosomal small subunit (SSU) processome.

It localises to the nucleus. Its subcellular location is the nucleolus. The protein resides in the membrane. Involved in nucleolar processing of pre-18S ribosomal RNA. Involved in ribosome biosynthesis. In Lodderomyces elongisporus (strain ATCC 11503 / CBS 2605 / JCM 1781 / NBRC 1676 / NRRL YB-4239) (Yeast), this protein is U3 small nucleolar RNA-associated protein 10.